Reading from the N-terminus, the 673-residue chain is Metal-nicotianamine transporter YSL1 (673 aa).

Residues 1 to 13 (MEIEQRRIMKREG) show a composition bias toward basic and acidic residues. A disordered region spans residues 1 to 39 (MEIEQRRIMKREGEEEEDNNQLSLQEEEPDTEEEMSGRT). Residues 14–34 (EEEEDNNQLSLQEEEPDTEEE) show a composition bias toward acidic residues. 16 consecutive transmembrane segments (helical) span residues 46–66 (QITV…SVIA), 71–91 (LTTG…FVFV), 119–139 (SAVA…LLGL), 163–183 (GLGW…FVLI), 225–245 (FMKY…FSGI), 260–280 (AWKQ…GMIC), 283–303 (LVNL…WPLL), 328–348 (VFLS…KILF), 392–412 (FAVS…PLIF), 420–440 (VIVA…GAGL), 442–462 (DINM…AVTG), 467–487 (VVAG…SCIL), 510–530 (IGTV…YKAF), 558–578 (FSAL…FAVL), 604–624 (FLVG…VFVW), and 642–662 (GLIC…LAGV).

The protein belongs to the YSL (TC 2.A.67.2) family. In terms of tissue distribution, low levels of expression in leaves and shoots, but not detected in roots. Restricted to the vasculature, in the xylem parenchyma surrounding xylem tubes. Expressed in pollen grains, in the vasculature of petals and sepals, in the carpel veins, in the style underneath the stigmatic papillae, in the vascular tissue of the funiculus and in the chalazal endosperm.

It is found in the membrane. Its function is as follows. Involved in iron loading of the seeds. Acts probably as a transporter of iron- and metal-nicotianamine chelates. The chain is Metal-nicotianamine transporter YSL1 (YSL1) from Arabidopsis thaliana (Mouse-ear cress).